A 196-amino-acid chain; its full sequence is Guanylate kinase (196 aa).

Positions 8–191 constitute a Guanylate kinase-like domain; that stretch reads GRLIVLTGPT…AAADLWSVIA (184 aa). 15–22 lines the ATP pocket; the sequence is GPTAVGKG.

This sequence belongs to the guanylate kinase family.

The protein resides in the cytoplasm. The enzyme catalyses GMP + ATP = GDP + ADP. Essential for recycling GMP and indirectly, cGMP. The sequence is that of Guanylate kinase from Bifidobacterium longum (strain NCC 2705).